Reading from the N-terminus, the 749-residue chain is Serine/threonine-protein phosphatase 4 regulatory subunit 3 (749 aa).

As to quaternary structure, regulatory subunit 3 (R3) of the histone H2A phosphatase complex (HTP-C) consisting of PPH3, PSY2 and PSY4.

The protein localises to the nucleus. Functionally, core regulatory subunit of the histone H2A phosphatase complex, which dephosphorylates H2AS128ph (gamma-H2A) that has been displaced from sites of DNA lesions in the double-stranded DNA break repair process. Dephosphorylation is necessary for efficient recovery from the DNA damage checkpoint. The chain is Serine/threonine-protein phosphatase 4 regulatory subunit 3 (PSY2) from Kluyveromyces lactis (strain ATCC 8585 / CBS 2359 / DSM 70799 / NBRC 1267 / NRRL Y-1140 / WM37) (Yeast).